We begin with the raw amino-acid sequence, 683 residues long: Solute carrier organic anion transporter family member 2B1 (683 aa).

Residues 1-30 are disordered; sequence MPDRSTKTTMGTEDMHERKVSVEPQDSHQD. Residues 1-41 are Cytoplasmic-facing; it reads MPDRSTKTTMGTEDMHERKVSVEPQDSHQDAQPRGMFHNIK. Positions 13 to 30 are enriched in basic and acidic residues; that stretch reads EDMHERKVSVEPQDSHQD. At Ser21 the chain carries Phosphoserine. Residues 42–61 form a helical membrane-spanning segment; it reads FFVLCHSLLQLTQLMISGYL. Residues 62–80 lie on the Extracellular side of the membrane; sequence KSSISTVEKRFGLSSQISG. The helical transmembrane segment at 81–101 threads the bilayer; it reads LLAAFNEVGNVSLILFVSYFG. At 102–107 the chain is on the cytoplasmic side; the sequence is SRVHRP. A helical membrane pass occupies residues 108 to 132; sequence RMIGYGALLVATAGLLMALPHFISE. The Extracellular portion of the chain corresponds to 133–177; it reads PYRYDHSSSDNRSLDFEASLCLPTTMAPASALSNGSCSSHTETKH. 2 N-linked (GlcNAc...) asparagine glycosylation sites follow: Asn143 and Asn166. Residues 178 to 207 form a helical membrane-spanning segment; that stretch reads LTMVGIMFAAQTLLGIGGVPIQPFGISYID. The Cytoplasmic segment spans residues 208 to 226; sequence DFAHHSNSPLYIGILFGIT. A helical transmembrane segment spans residues 227–247; sequence TMGPGLAYGLGSLMLRLYVDI. Residues 248–265 are Extracellular-facing; sequence DRMPEGGINLTPKDPRWV. Residues 266-290 traverse the membrane as a helical segment; the sequence is GAWWLGFLISSGLVVLASSPYFFFP. Residues 291–355 are Cytoplasmic-facing; sequence REMPKEKHEF…VKVFPRVLLR (65 aa). Phosphoserine occurs at positions 312 and 315. A helical transmembrane segment spans residues 356 to 377; it reads NLRHPIFLLVVLSQVCTSSMVA. At 378–397 the chain is on the extracellular side; it reads GMATFLPKFLERQFSITASF. The helical transmembrane segment at 398-421 threads the bilayer; it reads ANMLLGCLTIPLVIVGIMMGGVLV. Residues 422 to 425 are Cytoplasmic-facing; that stretch reads KRLH. Residues 426–449 traverse the membrane as a helical segment; it reads LSPVQCSALCLLGSLLCLLFSVPL. Residues 450–553 are Extracellular-facing; it reads FFIGCSTHQI…SACSRLVLPF (104 aa). A Kazal-like domain is found at 472 to 532; it reads PSLFPGCSEP…VFYTNCSCVA (61 aa). Intrachain disulfides connect Cys478–Cys509, Cys484–Cys505, and Cys493–Cys530. 2 N-linked (GlcNAc...) asparagine glycosylation sites follow: Asn527 and Asn534. A helical membrane pass occupies residues 554–576; that stretch reads IVLFSLGAGLASITHTPSFMLIL. The Cytoplasmic portion of the chain corresponds to 577-585; that stretch reads RGVKKEDKT. Residues 586-611 traverse the membrane as a helical segment; that stretch reads LAVGMQFMLLRVLAWMPSPVIHGSAI. Residues 612-644 are Extracellular-facing; the sequence is DTTCVHWALTCGRRAVCRYYDHDLLRNRFIGLQ. Residues 645-662 form a helical membrane-spanning segment; it reads FFFKSGSLVCFTLVLAIL. The Cytoplasmic portion of the chain corresponds to 663-683; sequence RQQSREASTRTTVKSSELQQL.

This sequence belongs to the organo anion transporter (TC 2.A.60) family. As to expression, expressed in liver, kidney, small intestine mucosa, large intestine, brain, lung, spleen, stomach and heart.

It is found in the cell membrane. The protein resides in the basal cell membrane. It localises to the apical cell membrane. It carries out the reaction dehydroepiandrosterone 3-sulfate(out) = dehydroepiandrosterone 3-sulfate(in). It catalyses the reaction estrone 3-sulfate(out) = estrone 3-sulfate(in). The enzyme catalyses estrone 3-sulfate(out) + hydrogencarbonate(in) = estrone 3-sulfate(in) + hydrogencarbonate(out). The catalysed reaction is taurocholate(out) = taurocholate(in). It carries out the reaction coproporphyrin III(out) = coproporphyrin III(in). It catalyses the reaction substance P(out) = substance P(in). The enzyme catalyses pregnenolone sulfate(out) = pregnenolone sulfate(in). The catalysed reaction is prostaglandin E2(out) = prostaglandin E2(in). It carries out the reaction prostaglandin D2(out) = prostaglandin D2(in). It catalyses the reaction L-thyroxine(out) = L-thyroxine(in). In terms of biological role, mediates the Na(+)-independent transport of steroid sulfate conjugates such as estrone 3-sulfate (E1S), dehydroepiandrosterone sulfate (DHEA-S) and pregnenolone sulfate (PregS) and other specific organic anions. Responsible for the transport of E1S through the basal membrane of syncytiotrophoblast, highlighting a potential role in the placental absorption of fetal-derived sulfated steroids including DHEA-S. Also facilitates the uptake of sulfated steroids at the basal/sinusoidal membrane of hepatocytes, therefore accounting for the major part of organic anions clearance of liver. Mediates the intestinal uptake of sulfated steroids. Mediates the uptake of the neurosteroids DHEA-S and PregS into the endothelial cells of the blood-brain barrier as the first step to enter the brain. Also plays a role in the reuptake of neuropeptides such as substance P/TAC1 and vasoactive intestinal peptide/VIP released from retinal neurons. May act as a heme transporter that promotes cellular iron availability. Also transports heme by-product coproporphyrin III (CPIII), and may be involved in their hepatic disposition. Mediates the uptake of other substrates such as prostaglandins D2 (PGD2), E1 (PGE1) and E2 (PGE2), taurocholate, L-thyroxine, leukotriene C4 and thromboxane B2. May contribute to regulate the transport of organic compounds in testis across the blood-testis-barrier. Shows a pH-sensitive substrate specificity which may be ascribed to the protonation state of the binding site and leads to a stimulation of substrate transport in an acidic microenvironment. The exact transport mechanism has not been yet deciphered but most likely involves an anion exchange, coupling the cellular uptake of organic substrate with the efflux of an anionic compound. Hydrogencarbonate/HCO3(-) acts as a probable counteranion that exchanges for organic anions. Cytoplasmic glutamate may also act as counteranion in the placenta. An inwardly directed proton gradient has also been proposed as the driving force of E1S uptake with a (H(+):E1S) stoichiometry of (1:1). The polypeptide is Solute carrier organic anion transporter family member 2B1 (Mus musculus (Mouse)).